The sequence spans 443 residues: Threonine/serine transporter TdcC (443 aa).

A run of 11 helical transmembrane segments spans residues 22 to 42 (TTWT…FFPI), 44 to 64 (AGFG…PIAF), 97 to 117 (GVVI…IYGV), 140 to 160 (FVAL…KDLM), 163 to 183 (VMSY…LSLI), 207 to 227 (ILVT…FSPI), 259 to 279 (ASML…FTLS), 319 to 339 (ASII…LGTL), 366 to 386 (ISMI…PNIL), 389 to 409 (IEAM…MYAI), and 423 to 443 (DNVF…YKLF).

This sequence belongs to the amino acid/polyamine transporter 2 family. SdaC/TdcC subfamily.

Its subcellular location is the cell inner membrane. It catalyses the reaction L-threonine(in) + H(+)(in) = L-threonine(out) + H(+)(out). It carries out the reaction L-serine(in) + H(+)(in) = L-serine(out) + H(+)(out). Involved in the import of threonine and serine into the cell, with the concomitant import of a proton (symport system). This chain is Threonine/serine transporter TdcC, found in Salmonella paratyphi B (strain ATCC BAA-1250 / SPB7).